We begin with the raw amino-acid sequence, 119 residues long: Large ribosomal subunit protein bL20 (119 aa).

The protein belongs to the bacterial ribosomal protein bL20 family.

Binds directly to 23S ribosomal RNA and is necessary for the in vitro assembly process of the 50S ribosomal subunit. It is not involved in the protein synthesizing functions of that subunit. The protein is Large ribosomal subunit protein bL20 of Buchnera aphidicola subsp. Cinara cedri (strain Cc).